The chain runs to 148 residues: Probable calcium-binding protein CML7 (148 aa).

EF-hand domains follow at residues Glu-9 to Asn-44, Pro-80 to Lys-115, and Leu-116 to Lys-148. Ca(2+) is bound by residues Asp-22, Asp-24, Asp-26, Arg-28, Glu-33, Asp-93, Asp-95, Ser-97, Thr-99, and Asp-104.

Potential calcium sensor. This chain is Probable calcium-binding protein CML7 (CML7), found in Oryza sativa subsp. japonica (Rice).